The following is a 103-amino-acid chain: Small ribosomal subunit protein uS10 (103 aa).

This sequence belongs to the universal ribosomal protein uS10 family. In terms of assembly, part of the 30S ribosomal subunit.

In terms of biological role, involved in the binding of tRNA to the ribosomes. The protein is Small ribosomal subunit protein uS10 of Mycoplasmopsis pulmonis (strain UAB CTIP) (Mycoplasma pulmonis).